The following is a 234-amino-acid chain: Triosephosphate isomerase (234 aa).

Residue 8-10 (NFK) participates in substrate binding. The Electrophile role is filled by H90. E159 serves as the catalytic Proton acceptor. 2 residues coordinate substrate: G165 and S197.

It belongs to the triosephosphate isomerase family. In terms of assembly, homodimer.

The protein resides in the cytoplasm. It catalyses the reaction D-glyceraldehyde 3-phosphate = dihydroxyacetone phosphate. It functions in the pathway carbohydrate biosynthesis; gluconeogenesis. The protein operates within carbohydrate degradation; glycolysis; D-glyceraldehyde 3-phosphate from glycerone phosphate: step 1/1. Its function is as follows. Involved in the gluconeogenesis. Catalyzes stereospecifically the conversion of dihydroxyacetone phosphate (DHAP) to D-glyceraldehyde-3-phosphate (G3P). The polypeptide is Triosephosphate isomerase (Helicobacter pylori (strain J99 / ATCC 700824) (Campylobacter pylori J99)).